Consider the following 865-residue polypeptide: Envelope glycoprotein B (865 aa).

Residues 1–21 (MHYFRRNCIFFLIVILYGTNS) form the signal peptide. Residues 22-731 (SPSTQNVTSR…SGVSAFMSNP (710 aa)) are Virion surface-facing. An N-linked (GlcNAc...) asparagine; by host glycan is attached at Asn27. 5 disulfide bridges follow: Cys49/Cys530, Cys66/Cys486, Cys140/Cys204, Cys298/Cys346, and Cys553/Cys590. The tract at residues 106 to 112 (TWTGTTY) is involved in fusion and/or binding to host membrane. Asn184 carries an N-linked (GlcNAc...) asparagine; by host glycan. An involved in fusion and/or binding to host membrane region spans residues 191–198 (GSPWIYRT). Residues Asn332, Asn364, Asn406, and Asn425 are each glycosylated (N-linked (GlcNAc...) asparagine; by host). An N-linked (GlcNAc...) asparagine; by host glycan is attached at Asn631. Hydrophobic membrane proximal region regions lie at residues 676 to 729 (INKV…AFMS) and 683 to 729 (DTNY…AFMS). The chain crosses the membrane as a helical span at residues 732-752 (FGALAIGLIIIAGLVAAFLAY). The Intravirion portion of the chain corresponds to 753–865 (RYVNKLKSNP…TYSDSEDDAV (113 aa)). A Golgi targeting motif is present at residues 809–812 (YMAL). The segment at 843–865 (IKNSNPKYDKLPTTYSDSEDDAV) is disordered. An Internalization motif motif is present at residues 850-853 (YDKL).

It belongs to the herpesviridae glycoprotein B family. As to quaternary structure, homotrimer; disulfide-linked. Binds to heparan sulfate proteoglycans. Interacts with gH/gL heterodimer. A proteolytic cleavage by host furin generates two subunits that remain linked by disulfide bonds.

Its subcellular location is the virion membrane. The protein resides in the host cell membrane. It localises to the host endosome membrane. It is found in the host Golgi apparatus membrane. Its function is as follows. Envelope glycoprotein that forms spikes at the surface of virion envelope. Essential for the initial attachment to heparan sulfate moieties of the host cell surface proteoglycans. Involved in fusion of viral and cellular membranes leading to virus entry into the host cell. Following initial binding to its host receptors, membrane fusion is mediated by the fusion machinery composed at least of gB and the heterodimer gH/gL. May be involved in the fusion between the virion envelope and the outer nuclear membrane during virion egress. This Gallid herpesvirus 2 (strain Chicken/Md5/ATCC VR-987) (GaHV-2) protein is Envelope glycoprotein B.